The following is a 294-amino-acid chain: Cytidine deaminase (294 aa).

CMP/dCMP-type deaminase domains are found at residues 48 to 168 and 186 to 294; these read DEDA…FGPK and LTGD…VLLA. 89 to 91 is a binding site for substrate; sequence NME. H102 provides a ligand contact to Zn(2+). E104 serves as the catalytic Proton donor. Positions 129 and 132 each coordinate Zn(2+).

This sequence belongs to the cytidine and deoxycytidylate deaminase family. Homodimer. Requires Zn(2+) as cofactor.

It catalyses the reaction cytidine + H2O + H(+) = uridine + NH4(+). It carries out the reaction 2'-deoxycytidine + H2O + H(+) = 2'-deoxyuridine + NH4(+). In terms of biological role, this enzyme scavenges exogenous and endogenous cytidine and 2'-deoxycytidine for UMP synthesis. This is Cytidine deaminase from Escherichia coli O17:K52:H18 (strain UMN026 / ExPEC).